The chain runs to 387 residues: V-set and immunoglobulin domain-containing protein 1 (387 aa).

A signal peptide spans 1-21 (MVFAFWKVFLILSCLAGQVSV). Residues 22-132 (VQVTIPDGFV…DFLGQNQGIL (111 aa)) form the Ig-like V-type domain. The Extracellular segment spans residues 22-232 (VQVTIPDGFV…EIDLTSSHPE (211 aa)). Asn32 and Asn38 each carry an N-linked (GlcNAc...) asparagine glycan. Cysteines 43 and 116 form a disulfide. N-linked (GlcNAc...) asparagine glycosylation is found at Asn133, Asn200, and Asn219. Residues 140 to 227 (PSKPLCSVQG…GNSSCEIDLT (88 aa)) form the Ig-like C2-type domain. A disulfide bond links Cys161 and Cys211. The helical transmembrane segment at 233 to 253 (VGIIVGALIGSLVGAAIIISV) threads the bilayer. Over 254–387 (VCFARNKAKA…SEDEKGVVKA (134 aa)) the chain is Cytoplasmic. The disordered stretch occupies residues 266 to 387 (KERNSKTIAE…SEDEKGVVKA (122 aa)). The segment covering 284-296 (PRGESEAMPREDA) has biased composition (basic and acidic residues). Positions 299–308 (LEVTLPSSIH) are enriched in polar residues. Pro residues predominate over residues 325–335 (TQEPAPEPAPG). Residues 344 to 368 (LDIELELEPETQSELEPEPEPEPES) are compositionally biased toward acidic residues.

Highly N-glycosylated. Appears not to contain significant amounts of O-linked carbohydrates or sialic acid in its sugar moieties. As to expression, detected only in stomach mucosa and testis, and to a much lesser level in pancreas (at protein level). Detected in gastric cancers (31%), esophageal carcinomas (50%) and ovarian cancers (23%).

The protein resides in the membrane. The polypeptide is V-set and immunoglobulin domain-containing protein 1 (VSIG1) (Homo sapiens (Human)).